Reading from the N-terminus, the 361-residue chain is Tyrosine--tRNA ligase (361 aa).

L-tyrosine-binding residues include Tyr36, Tyr162, Gln166, Asp169, and Gln184. The 'KMSKS' region motif lies at 236-240; that stretch reads KMSKS. Lys239 lines the ATP pocket.

The protein belongs to the class-I aminoacyl-tRNA synthetase family. TyrS type 4 subfamily. Homodimer.

The protein localises to the cytoplasm. The catalysed reaction is tRNA(Tyr) + L-tyrosine + ATP = L-tyrosyl-tRNA(Tyr) + AMP + diphosphate + H(+). Its function is as follows. Catalyzes the attachment of tyrosine to tRNA(Tyr) in a two-step reaction: tyrosine is first activated by ATP to form Tyr-AMP and then transferred to the acceptor end of tRNA(Tyr). The protein is Tyrosine--tRNA ligase of Saccharolobus islandicus (strain Y.N.15.51 / Yellowstone #2) (Sulfolobus islandicus).